A 561-amino-acid chain; its full sequence is GPI mannosyltransferase 3 (561 aa).

Helical transmembrane passes span Leu3 to Tyr25, Ile64 to Val84, Trp110 to Ala130, Leu155 to Leu175, Phe195 to Gly215, Phe246 to Met266, Tyr275 to Val295, and Thr328 to Leu348. N-linked (GlcNAc...) asparagine glycosylation is found at Asn398 and Asn456. A disordered region spans residues Glu525–Pro546. Residues Gly535–Pro546 show a composition bias toward basic and acidic residues.

This sequence belongs to the glycosyltransferase 22 family. PIGB subfamily.

It is found in the endoplasmic reticulum membrane. It participates in glycolipid biosynthesis; glycosylphosphatidylinositol-anchor biosynthesis. Its function is as follows. Mannosyltransferase involved in glycosylphosphatidylinositol-anchor biosynthesis. Transfers the third alpha-1,2-mannose to Man2-GlcN-acyl-PI during GPI precursor assembly. This Drosophila melanogaster (Fruit fly) protein is GPI mannosyltransferase 3.